A 287-amino-acid chain; its full sequence is Protease HtpX (287 aa).

2 consecutive transmembrane segments (helical) span residues 4 to 24 (IFLL…VMSI) and 33 to 53 (GGLL…SLAI). A Zn(2+)-binding site is contributed by H139. E140 is a catalytic residue. H143 lines the Zn(2+) pocket. The next 2 helical transmembrane spans lie at 154–174 (LIQG…AGII) and 195–215 (AVVF…VAYF). Position 220 (E220) interacts with Zn(2+).

Belongs to the peptidase M48B family. The cofactor is Zn(2+).

It is found in the cell inner membrane. In Shewanella sp. (strain ANA-3), this protein is Protease HtpX.